A 341-amino-acid chain; its full sequence is C2 calcium-dependent domain-containing protein 4D (341 aa).

The span at 56–71 shows a compositional bias: basic and acidic residues; that stretch reads RLRDPRGAEGRVDRNP. Disordered regions lie at residues 56–75 and 134–176; these read RLRD…GGRN and CRAP…PYAP. The span at 139–149 shows a compositional bias: low complexity; it reads SDTASSPDSSP. Residues 205-331 form the C2 domain; sequence RGGQLRLSTE…PPLAGGLGPG (127 aa).

This chain is C2 calcium-dependent domain-containing protein 4D (C2cd4d), found in Mus musculus (Mouse).